Here is a 351-residue protein sequence, read N- to C-terminus: Photosystem II D2 protein (351 aa).

Residues 39–59 form a helical membrane-spanning segment; that stretch reads TAYLAIGGWLTGTTFVTSWYT. Position 116 (His116) interacts with chlorophyll a. Residues 123–139 form a helical membrane-spanning segment; that stretch reads GFMLRQFEIARLVGIRP. Residues Gln128 and Asn141 each contribute to the pheophytin a site. A helical transmembrane segment spans residues 151–164; the sequence is VFVSVFLMYPLGQS. His196 provides a ligand contact to chlorophyll a. Residues 206 to 226 form a helical membrane-spanning segment; it reads GALLCAIHGATVENTLFEDGE. A plastoquinone contacts are provided by His213 and Phe260. His213 is a Fe cation binding site. Position 267 (His267) interacts with Fe cation. The chain crosses the membrane as a helical span at residues 277-293; the sequence is GLWTSSIGIIGLALNLR.

The protein belongs to the reaction center PufL/M/PsbA/D family. In terms of assembly, PSII is composed of 1 copy each of membrane proteins PsbA, PsbB, PsbC, PsbD, PsbE, PsbF, PsbH, PsbI, PsbJ, PsbK, PsbL, PsbM, PsbT, PsbX, PsbY, PsbZ, Psb30/Ycf12, peripheral proteins PsbO, CyanoQ (PsbQ), PsbU, PsbV and a large number of cofactors. It forms dimeric complexes. The cofactor is The D1/D2 heterodimer binds P680, chlorophylls that are the primary electron donor of PSII, and subsequent electron acceptors. It shares a non-heme iron and each subunit binds pheophytin, quinone, additional chlorophylls, carotenoids and lipids. There is also a Cl(-1) ion associated with D1 and D2, which is required for oxygen evolution. The PSII complex binds additional chlorophylls, carotenoids and specific lipids..

It is found in the cellular thylakoid membrane. It carries out the reaction 2 a plastoquinone + 4 hnu + 2 H2O = 2 a plastoquinol + O2. Its function is as follows. Photosystem II (PSII) is a light-driven water:plastoquinone oxidoreductase that uses light energy to abstract electrons from H(2)O, generating O(2) and a proton gradient subsequently used for ATP formation. It consists of a core antenna complex that captures photons, and an electron transfer chain that converts photonic excitation into a charge separation. The D1/D2 (PsbA/PsbD) reaction center heterodimer binds P680, the primary electron donor of PSII as well as several subsequent electron acceptors. D2 is needed for assembly of a stable PSII complex. The chain is Photosystem II D2 protein from Parasynechococcus marenigrum (strain WH8102).